Reading from the N-terminus, the 400-residue chain is MKEKTIIIVGGGQAAAMAAASLRQQGFTGELHLFSDEQHLPYERPPLSKSMLLEDSPQLQSVLPAHWWQENNVHLHSGVTIKTLGRDTRELVLANGESWHWDQLFIATGAAARPLPLLDALGERCFTLRHAGDAARLREVLQPERSVVIVGAGTIGLELAASATQRGCKVTVIELAATVMGRNAPPPVQHYLLQRHQQAGVRILLNNAIEHVVDGENVELTLQSGETLRADVVIYGIGISANDQLAREANLDTANGIVIDEACRTCDPAIFAGGDVAITRLDNGALHRCESWENANNQAQIAASAMLGLPLPRLPPPWFWSDQYSDNLQFIGDMHGDDWLCRGNPETQKAIWFNLQNGVLIGAVTLNQGREIRPIRKWIQSGKTFDAKLLTDEDIALKSL.

FAD is bound at residue 5–36; that stretch reads TIIIVGGGQAAAMAAASLRQQGFTGELHLFSD. 146–174 contacts NAD(+); the sequence is SVVIVGAGTIGLELAASATQRGCKVTVIE.

This sequence belongs to the bacterial ring-hydroxylating dioxygenase ferredoxin reductase family. As to quaternary structure, this dioxygenase system consists of four proteins: the two subunits of the hydroxylase component (HcaE and HcaF), a ferredoxin (HcaC) and a ferredoxin reductase (HcaD). It depends on FAD as a cofactor.

It catalyses the reaction 2 reduced [2Fe-2S]-[ferredoxin] + NAD(+) + H(+) = 2 oxidized [2Fe-2S]-[ferredoxin] + NADH. Its pathway is aromatic compound metabolism; 3-phenylpropanoate degradation. In terms of biological role, part of the multicomponent 3-phenylpropionate dioxygenase, that converts 3-phenylpropionic acid (PP) and cinnamic acid (CI) into 3-phenylpropionate-dihydrodiol (PP-dihydrodiol) and cinnamic acid-dihydrodiol (CI-dihydrodiol), respectively. The protein is 3-phenylpropionate/cinnamic acid dioxygenase ferredoxin--NAD(+) reductase component of Escherichia coli (strain SMS-3-5 / SECEC).